We begin with the raw amino-acid sequence, 396 residues long: Methylthioribose kinase (396 aa).

ATP contacts are provided by residues Asn44, Lys61, and 115 to 117 (EDL). Residue Asp233 coordinates substrate. 250–252 (DPE) provides a ligand contact to ATP. Substrate is bound at residue Arg340.

This sequence belongs to the methylthioribose kinase family. In terms of assembly, homodimer.

It catalyses the reaction 5-(methylsulfanyl)-D-ribose + ATP = 5-(methylsulfanyl)-alpha-D-ribose 1-phosphate + ADP + H(+). Its pathway is amino-acid biosynthesis; L-methionine biosynthesis via salvage pathway; S-methyl-5-thio-alpha-D-ribose 1-phosphate from S-methyl-5'-thioadenosine (hydrolase route): step 2/2. Functionally, catalyzes the phosphorylation of methylthioribose into methylthioribose-1-phosphate. The polypeptide is Methylthioribose kinase (Geobacillus kaustophilus (strain HTA426)).